The primary structure comprises 443 residues: Xaa-Pro dipeptidase (443 aa).

Mn(2+)-binding residues include D246, D257, H339, E384, and E423.

This sequence belongs to the peptidase M24B family. Bacterial-type prolidase subfamily. It depends on Mn(2+) as a cofactor.

It carries out the reaction Xaa-L-Pro dipeptide + H2O = an L-alpha-amino acid + L-proline. In terms of biological role, splits dipeptides with a prolyl residue in the C-terminal position. The sequence is that of Xaa-Pro dipeptidase from Yersinia pseudotuberculosis serotype I (strain IP32953).